The primary structure comprises 558 residues: Phosphatidylserine lipase ABHD16A (558 aa).

2 helical membrane-spanning segments follow: residues 60–80 (ILAL…FAFF) and 93–113 (VVPF…VACL). Over 114–558 (RGIGRWTNPQ…AQNFQMPWHL (445 aa)) the chain is Cytoplasmic. Residues 281–407 (LVICCEGNAG…LVTRTVRQHL (127 aa)) form the AB hydrolase-1 domain. Residues S355, D430, and H507 each act as charge relay system in the active site.

Belongs to the AB hydrolase superfamily. ABHD16 family.

Its subcellular location is the membrane. The catalysed reaction is 1-heptadecanoyl-2-(5Z,8Z,11Z,14Z-eicosatetraenoyl)-sn-glycero-3-phosphoserine + H2O = 1-heptadecanoyl-sn-glycero-3-phosphoserine + (5Z,8Z,11Z,14Z)-eicosatetraenoate + H(+). It carries out the reaction 1-hexadecanoyl-2-(9Z-octadecenoyl)-sn-glycero-3-phospho-L-serine + H2O = 1-hexadecanoyl-sn-glycero-3-phospho-L-serine + (9Z)-octadecenoate + H(+). The enzyme catalyses 1-octadecanoyl-2-(9Z,12Z-octadecadienoyl)-sn-glycero-3-phosphoserine + H2O = 1-octadecanoyl-sn-glycero-3-phosphoserine + (9Z,12Z)-octadecadienoate + H(+). It catalyses the reaction 1-heptadecanoyl-2-(5Z,8Z,11Z,14Z-eicosatetraenoyl)-sn-glycero-3-phosphocholine + H2O = 1-heptadecanoyl-sn-glycero-3-phosphocholine + (5Z,8Z,11Z,14Z)-eicosatetraenoate + H(+). The catalysed reaction is 1-hexadecanoyl-2-(9Z-octadecenoyl)-sn-glycero-3-phosphoglycerol + H2O = 1-hexadecanoyl-sn-glycero-3-phosphoglycerol + (9Z)-octadecenoate + H(+). It carries out the reaction 1-hexadecanoyl-2-(9Z-octadecenoyl)-sn-glycero-3-phospho-(1D-myo-inositol) + H2O = 1-hexadecanoyl-sn-glycero-3-phospho-(1D-myo-inositol) + (9Z)-octadecenoate + H(+). The enzyme catalyses 1-heptadecanoyl-2-(5Z,8Z,11Z,14Z-eicosatetraenoyl)-sn-glycero-3-phosphoethanolamine + H2O = 1-heptadecanoyl-sn-glycero-3-phosphoethanolamine + (5Z,8Z,11Z,14Z)-eicosatetraenoate + H(+). It catalyses the reaction 1-hexadecanoyl-2-(9Z-octadecenoyl)-sn-glycero-3-phospho-(1'-sn-glycerol) + H2O = 1-hexadecanoyl-sn-glycero-3-phospho-(1'-sn-glycerol) + (9Z)-octadecenoate + H(+). The catalysed reaction is Hydrolyzes glycerol monoesters of long-chain fatty acids.. It carries out the reaction 1-tetradecanoylglycerol + H2O = tetradecanoate + glycerol + H(+). The enzyme catalyses 2-hexadecanoylglycerol + H2O = glycerol + hexadecanoate + H(+). It catalyses the reaction 1-(9Z-octadecenoyl)-glycerol + H2O = glycerol + (9Z)-octadecenoate + H(+). The catalysed reaction is 2-(9Z-octadecenoyl)-glycerol + H2O = glycerol + (9Z)-octadecenoate + H(+). It carries out the reaction 2-(9Z,12Z-octadecadienoyl)-glycerol + H2O = (9Z,12Z)-octadecadienoate + glycerol + H(+). The enzyme catalyses 1-(5Z,8Z,11Z,14Z-eicosatetraenoyl)-glycerol + H2O = glycerol + (5Z,8Z,11Z,14Z)-eicosatetraenoate + H(+). It catalyses the reaction 2-(5Z,8Z,11Z,14Z-eicosatetraenoyl)-glycerol + H2O = glycerol + (5Z,8Z,11Z,14Z)-eicosatetraenoate + H(+). The catalysed reaction is prostaglandin D2-1-glycerol ester + H2O = prostaglandin D2 + glycerol + H(+). It carries out the reaction 2-glyceryl-15-deoxy-Delta(12,14)-prostaglandin J2 + H2O = 15-deoxy-Delta(12,14)-prostaglandin J2 + glycerol + H(+). The enzyme catalyses 1-(9Z,12Z-octadecadienoyl)-glycerol + H2O = (9Z,12Z)-octadecadienoate + glycerol + H(+). Phosphatidylserine (PS) lipase that mediates the hydrolysis of phosphatidylserine to generate lysophosphatidylserine (LPS). LPS constitutes a class of signaling lipids that regulates immunological and neurological processes. Has no activity towards diacylglycerol, triacylglycerol or lysophosphatidylserine lipase. Also has monoacylglycerol lipase activity, with preference for 1-(9Z,12Z-octadecadienoyl)-glycerol (1-LG) and 2-glyceryl-15-deoxy-Delta(12,14)-prostaglandin J2 (15d-PGJ(2)-G). The sequence is that of Phosphatidylserine lipase ABHD16A from Pongo abelii (Sumatran orangutan).